We begin with the raw amino-acid sequence, 426 residues long: D-tagatose-1,6-bisphosphate aldolase subunit KbaZ (426 aa).

This sequence belongs to the GatZ/KbaZ family. KbaZ subfamily. As to quaternary structure, forms a complex with KbaY.

The protein operates within carbohydrate metabolism; D-tagatose 6-phosphate degradation; D-glyceraldehyde 3-phosphate and glycerone phosphate from D-tagatose 6-phosphate: step 2/2. In terms of biological role, component of the tagatose-1,6-bisphosphate aldolase KbaYZ that is required for full activity and stability of the Y subunit. Could have a chaperone-like function for the proper and stable folding of KbaY. When expressed alone, KbaZ does not show any aldolase activity. This is D-tagatose-1,6-bisphosphate aldolase subunit KbaZ from Escherichia coli (strain ATCC 8739 / DSM 1576 / NBRC 3972 / NCIMB 8545 / WDCM 00012 / Crooks).